The following is a 148-amino-acid chain: UPF0756 membrane protein YeaL (148 aa).

Transmembrane regions (helical) follow at residues 14–34, 51–71, 86–106, and 112–132; these read ALGF…LIIV, LSIG…SGTL, LVAI…VTLM, and LVAG…GVPV.

The protein belongs to the UPF0756 family.

It is found in the cell membrane. The sequence is that of UPF0756 membrane protein YeaL from Escherichia coli O157:H7.